A 548-amino-acid chain; its full sequence is Probable 5-epi-aristolochene synthase 4 (548 aa).

Mg(2+) is bound by residues Asp-301, Asp-305, Asp-444, Thr-448, and Glu-452. The DDXXD motif signature appears at 301–305 (DDTFD).

This sequence belongs to the terpene synthase family. Monomer. Mg(2+) is required as a cofactor.

The protein localises to the cytoplasm. It catalyses the reaction (2E,6E)-farnesyl diphosphate = (+)-5-epi-aristolochene + diphosphate. The protein operates within secondary metabolite biosynthesis; terpenoid biosynthesis. Catalyzes the cyclization of trans,trans-farnesyl diphosphate (FPP) to the bicyclic intermediate 5-epi-aristolochene, initial step in the conversion of FPP to the sesquiterpenoid antifungal phytoalexin capsidiol. Produces germacrene A as an enzyme-bound intermediate that is not released by the enzyme, but is further cyclized to produce the bicyclic 5-epi-aristolochene. The polypeptide is Probable 5-epi-aristolochene synthase 4 (Nicotiana attenuata (Coyote tobacco)).